A 460-amino-acid chain; its full sequence is Bifunctional protein GlmU (460 aa).

The tract at residues 1 to 229 (MTNYAIILAA…FNESLGVNDR (229 aa)) is pyrophosphorylase. UDP-N-acetyl-alpha-D-glucosamine is bound by residues 8–11 (LAAG), K22, Q72, and 77–78 (GT). Mg(2+) is bound at residue D102. 4 residues coordinate UDP-N-acetyl-alpha-D-glucosamine: G139, E154, N169, and N227. N227 is a Mg(2+) binding site. The linker stretch occupies residues 230-250 (VALATAETVMRQRITQKHMVN). The interval 251–460 (GVTFHNPETV…RLAHHPSRSK (210 aa)) is N-acetyltransferase. UDP-N-acetyl-alpha-D-glucosamine contacts are provided by R332 and K350. The active-site Proton acceptor is the H362. UDP-N-acetyl-alpha-D-glucosamine contacts are provided by Y365 and N376. Acetyl-CoA-binding positions include A379, 385 to 386 (NY), S404, A422, and R439.

In the N-terminal section; belongs to the N-acetylglucosamine-1-phosphate uridyltransferase family. This sequence in the C-terminal section; belongs to the transferase hexapeptide repeat family. Homotrimer. Mg(2+) serves as cofactor.

The protein resides in the cytoplasm. It carries out the reaction alpha-D-glucosamine 1-phosphate + acetyl-CoA = N-acetyl-alpha-D-glucosamine 1-phosphate + CoA + H(+). The enzyme catalyses N-acetyl-alpha-D-glucosamine 1-phosphate + UTP + H(+) = UDP-N-acetyl-alpha-D-glucosamine + diphosphate. The protein operates within nucleotide-sugar biosynthesis; UDP-N-acetyl-alpha-D-glucosamine biosynthesis; N-acetyl-alpha-D-glucosamine 1-phosphate from alpha-D-glucosamine 6-phosphate (route II): step 2/2. It functions in the pathway nucleotide-sugar biosynthesis; UDP-N-acetyl-alpha-D-glucosamine biosynthesis; UDP-N-acetyl-alpha-D-glucosamine from N-acetyl-alpha-D-glucosamine 1-phosphate: step 1/1. Its pathway is bacterial outer membrane biogenesis; LPS lipid A biosynthesis. Functionally, catalyzes the last two sequential reactions in the de novo biosynthetic pathway for UDP-N-acetylglucosamine (UDP-GlcNAc). The C-terminal domain catalyzes the transfer of acetyl group from acetyl coenzyme A to glucosamine-1-phosphate (GlcN-1-P) to produce N-acetylglucosamine-1-phosphate (GlcNAc-1-P), which is converted into UDP-GlcNAc by the transfer of uridine 5-monophosphate (from uridine 5-triphosphate), a reaction catalyzed by the N-terminal domain. The protein is Bifunctional protein GlmU of Streptococcus pyogenes serotype M3 (strain ATCC BAA-595 / MGAS315).